The primary structure comprises 542 residues: 4-coumarate--CoA ligase-like 1 (542 aa).

ATP is bound by residues S189, S190, G191, T192, T193, and K197. Residue Y237 coordinates (E)-4-coumaroyl-AMP. R258 contributes to the CoA binding site. The tract at residues 260–331 (DLRIFLNALI…AKFPNVQVQE (72 aa)) is SBD1. (E)-4-coumaroyl-AMP is bound by residues A309, E331, A332, and T336. Positions 331, 332, 336, 420, and 435 each coordinate ATP. The SBD2 stretch occupies residues 332-399 (AYGLTEHSCI…VRSQCVMQGY (68 aa)). K437 and K441 together coordinate (E)-4-coumaroyl-AMP. Residues K443 and G444 each contribute to the CoA site. K526 contacts ATP.

It belongs to the ATP-dependent AMP-binding enzyme family. As to quaternary structure, interacts with TKPR1, PKSA and PKSB. Mg(2+) is required as a cofactor. Mostly confined to anther tapetal cells.

The protein resides in the endoplasmic reticulum. It catalyses the reaction (E)-4-coumarate + ATP + CoA = (E)-4-coumaroyl-CoA + AMP + diphosphate. The catalysed reaction is (E)-4-coumarate + ATP + H(+) = (E)-4-coumaroyl-AMP + diphosphate. The enzyme catalyses (E)-4-coumaroyl-AMP + CoA = (E)-4-coumaroyl-CoA + AMP + H(+). Its function is as follows. Carboxylate--CoA ligase that may use 4-coumarate as substrate. Follows a two-step reaction mechanism, wherein the carboxylate substrate first undergoes adenylation by ATP, followed by a thioesterification in the presence of CoA to yield the final CoA thioester. The chain is 4-coumarate--CoA ligase-like 1 from Arabidopsis thaliana (Mouse-ear cress).